Reading from the N-terminus, the 621-residue chain is Phosphomethylpyrimidine synthase (621 aa).

Over residues M1–P23 the composition is skewed to low complexity. The interval M1 to Y29 is disordered. Residues N215, M244, Y273, H309, S329 to G331, D370 to R373, and E409 contribute to the substrate site. H413 is a binding site for Zn(2+). Residue Y436 coordinates substrate. Residue H477 participates in Zn(2+) binding. [4Fe-4S] cluster is bound by residues C557, C560, and C565.

It belongs to the ThiC family. Homodimer. The cofactor is [4Fe-4S] cluster.

The enzyme catalyses 5-amino-1-(5-phospho-beta-D-ribosyl)imidazole + S-adenosyl-L-methionine = 4-amino-2-methyl-5-(phosphooxymethyl)pyrimidine + CO + 5'-deoxyadenosine + formate + L-methionine + 3 H(+). The protein operates within cofactor biosynthesis; thiamine diphosphate biosynthesis. In terms of biological role, catalyzes the synthesis of the hydroxymethylpyrimidine phosphate (HMP-P) moiety of thiamine from aminoimidazole ribotide (AIR) in a radical S-adenosyl-L-methionine (SAM)-dependent reaction. This Rhodospirillum rubrum (strain ATCC 11170 / ATH 1.1.1 / DSM 467 / LMG 4362 / NCIMB 8255 / S1) protein is Phosphomethylpyrimidine synthase.